Reading from the N-terminus, the 348-residue chain is Uroporphyrinogen decarboxylase (348 aa).

Substrate is bound by residues 28–32 (RQAGR), Asp78, Tyr154, Thr209, and His325.

The protein belongs to the uroporphyrinogen decarboxylase family. In terms of assembly, homodimer.

The protein localises to the cytoplasm. It carries out the reaction uroporphyrinogen III + 4 H(+) = coproporphyrinogen III + 4 CO2. It participates in porphyrin-containing compound metabolism; protoporphyrin-IX biosynthesis; coproporphyrinogen-III from 5-aminolevulinate: step 4/4. Its function is as follows. Catalyzes the decarboxylation of four acetate groups of uroporphyrinogen-III to yield coproporphyrinogen-III. The protein is Uroporphyrinogen decarboxylase of Rhodopseudomonas palustris (strain HaA2).